A 311-amino-acid chain; its full sequence is Olfactory receptor 10G8 (311 aa).

Topologically, residues 1–23 (MSNASLLTAFILMGLPHAPALDA) are extracellular. N-linked (GlcNAc...) asparagine glycosylation is present at Asn3. The helical transmembrane segment at 24–44 (PLFGVFLVVYVLTVLGNLLIL) threads the bilayer. Over 45 to 52 (LVIRVDSH) the chain is Cytoplasmic. The helical transmembrane segment at 53-73 (LHTTMYYFLTNLSFIDMWFST) threads the bilayer. Over 74–98 (VTVPKLLMTLVFPSGRAISFHSCMA) the chain is Extracellular. Cys96 and Cys188 are disulfide-bonded. Residues 99–119 (QLYFFHFLGGTECFLYRVMSC) traverse the membrane as a helical segment. Over 120–138 (DRYLAISYPLRYTSMMTGR) the chain is Cytoplasmic. The chain crosses the membrane as a helical span at residues 139–159 (SCTLLATSTWLSGSLHSAVQA). Over 160-196 (ILTFHLPYCGPNWIQHYLCDAPPILKLACADTSAIET) the chain is Extracellular. A helical transmembrane segment spans residues 197–216 (VIFVTVGIVASGCFVLIVLS). Residues 217-236 (YVSIVCSILRIRTSEGKHRA) are Cytoplasmic-facing. Residues 237–257 (FQTCASHCIVVLCFFGPGLFI) form a helical membrane-spanning segment. Over 258 to 268 (YLRPGSRKAVD) the chain is Extracellular. The chain crosses the membrane as a helical span at residues 269–289 (GVVAVFYTVLTPLLNPVVYTL). Over 290 to 311 (RNKEVKKALLKLKDKVAHSQSK) the chain is Cytoplasmic.

It belongs to the G-protein coupled receptor 1 family.

The protein resides in the cell membrane. Its function is as follows. Odorant receptor. This Homo sapiens (Human) protein is Olfactory receptor 10G8 (OR10G8).